The primary structure comprises 276 residues: Radial spoke head protein 9 homolog (276 aa).

This sequence belongs to the flagellar radial spoke RSP9 family. In terms of assembly, component of the axonemal radial spoke 1 (RS1) and 2 (RS2) complexes, at least composed of spoke head proteins RSPH1, RSPH3, RSPH9 and the cilia-specific component RSPH4A or sperm-specific component RSPH6A, spoke stalk proteins RSPH14, DNAJB13, DYDC1, ROPN1L and NME5, and the RS1 complex-specific anchor protein IQUB. Interacts with IQUB. Interacts with RSPH3B. Interacts with RSPH4A. Interacts with RSPH6A. Interacts with CFAP61. Interacts with LRRC23.

Its subcellular location is the cytoplasm. It is found in the cytoskeleton. The protein localises to the cilium axoneme. The protein resides in the flagellum axoneme. It localises to the cell projection. Its subcellular location is the kinocilium. Its function is as follows. Functions as part of axonemal radial spoke complexes that play an important part in the motility of sperm and cilia. Essential for both the radial spoke head assembly and the central pair microtubule stability in ependymal motile cilia. Required for motility of olfactory and neural cilia and for the structural integrity of ciliary axonemes in both 9+0 and 9+2 motile cilia. This Bos taurus (Bovine) protein is Radial spoke head protein 9 homolog (RSPH9).